The chain runs to 428 residues: Peptidase B (428 aa).

2 residues coordinate Mn(2+): K195 and D200. K207 is an active-site residue. Positions 218, 277, and 279 each coordinate Mn(2+). R281 is a catalytic residue.

It belongs to the peptidase M17 family. In terms of assembly, homohexamer. Requires Mn(2+) as cofactor.

The protein resides in the cytoplasm. The catalysed reaction is Release of an N-terminal amino acid, Xaa, from a peptide or arylamide. Xaa is preferably Glu or Asp but may be other amino acids, including Leu, Met, His, Cys and Gln.. Functionally, probably plays an important role in intracellular peptide degradation. This is Peptidase B from Klebsiella pneumoniae (strain 342).